We begin with the raw amino-acid sequence, 415 residues long: MKAISVLGSTGSIGTQTLQIAEEFPEQFRVVALTAGRNLKLLVEQVQRHRPEVVALADSDLLPELQERLKDAGVTGADAPQLVGGADGLNVAAAWDSADLVVTGIVGCAGLLPTLAAIRAGKDLALANKETLIAAGPVVLPELKKSGSRLLPADSEHSAIFQCLQGTPWAENARLSTGVPTPGLRRIQLTASGGAFRDWTAADLEKATVADATSHPNWSMGRKITVDSASLMNKGLEVIEAHYLFGLDYDHIEIVIHPQSIIHSMIELADSSVLAQLGWPDMKLPILYCLSWPSRLETPWRRLDLTEVGQLSFRAPDPAKYPCMELAYAAGSAGGTMPAVMNAANEEAVAQFLEEKIHFLDIPTVIEAACERHKPDLMAQPQLDDVLRVDQWARTAVREQVNRGVTRLPMGAIAA.

NADPH contacts are provided by Thr10, Gly11, Ser12, Ile13, Gly36, Arg37, Asn38, and Asn128. Lys129 lines the 1-deoxy-D-xylulose 5-phosphate pocket. Glu130 is an NADPH binding site. Asp154 is a Mn(2+) binding site. Positions 155, 156, 192, and 215 each coordinate 1-deoxy-D-xylulose 5-phosphate. Glu156 contacts Mn(2+). Gly221 contributes to the NADPH binding site. The 1-deoxy-D-xylulose 5-phosphate site is built by Ser228, Asn233, Lys234, and Glu237. Glu237 serves as a coordination point for Mn(2+).

This sequence belongs to the DXR family. Mg(2+) serves as cofactor. Mn(2+) is required as a cofactor.

It carries out the reaction 2-C-methyl-D-erythritol 4-phosphate + NADP(+) = 1-deoxy-D-xylulose 5-phosphate + NADPH + H(+). The protein operates within isoprenoid biosynthesis; isopentenyl diphosphate biosynthesis via DXP pathway; isopentenyl diphosphate from 1-deoxy-D-xylulose 5-phosphate: step 1/6. In terms of biological role, catalyzes the NADPH-dependent rearrangement and reduction of 1-deoxy-D-xylulose-5-phosphate (DXP) to 2-C-methyl-D-erythritol 4-phosphate (MEP). The polypeptide is 1-deoxy-D-xylulose 5-phosphate reductoisomerase (Synechococcus sp. (strain CC9605)).